A 264-amino-acid polypeptide reads, in one-letter code: Nicotinamide N-methyltransferase (264 aa).

Residue Arg-18 is modified to Citrulline; alternate. S-adenosyl-L-methionine contacts are provided by Tyr-20 and Tyr-25. N6-acetyllysine is present on Lys-39. 4 residues coordinate S-adenosyl-L-methionine: Gly-63, Tyr-69, Asp-85, and Asn-90. Citrulline; alternate is present on Arg-132. Residues 142–143 (DV) and Thr-163 each bind S-adenosyl-L-methionine. The residue at position 181 (Arg-181) is a Citrulline; alternate. Positions 197 and 213 each coordinate nicotinamide.

It belongs to the class I-like SAM-binding methyltransferase superfamily. NNMT/PNMT/TEMT family. In terms of assembly, monomer. In terms of processing, deiminated by PADI1 and PADI2. Predominantly expressed in the liver. A lower expression is seen in the kidney, lung, skeletal muscle, placenta and heart. Not detected in the brain or pancreas.

It is found in the cytoplasm. The catalysed reaction is nicotinamide + S-adenosyl-L-methionine = 1-methylnicotinamide + S-adenosyl-L-homocysteine. It participates in cofactor metabolism. The protein operates within amino-acid degradation. Its activity is regulated as follows. Inactivated by deimination on Arg-132. Catalyzes the N-methylation of nicotinamide using the universal methyl donor S-adenosyl-L-methionine to form N1-methylnicotinamide and S-adenosyl-L-homocysteine, a predominant nicotinamide/vitamin B3 clearance pathway. Plays a central role in regulating cellular methylation potential, by consuming S-adenosyl-L-methionine and limiting its availability for other methyltransferases. Actively mediates genome-wide epigenetic and transcriptional changes through hypomethylation of repressive chromatin marks, such as H3K27me3. In a developmental context, contributes to low levels of the repressive histone marks that characterize pluripotent embryonic stem cell pre-implantation state. Acts as a metabolic regulator primarily on white adipose tissue energy expenditure as well as hepatic gluconeogenesis and cholesterol biosynthesis. In white adipocytes, regulates polyamine flux by consuming S-adenosyl-L-methionine which provides for propylamine group in polyamine biosynthesis, whereas by consuming nicotinamide controls NAD(+) levels through the salvage pathway. Via its product N1-methylnicotinamide regulates protein acetylation in hepatocytes, by repressing the ubiquitination and increasing the stability of SIRT1 deacetylase. Can also N-methylate other pyridines structurally related to nicotinamide and play a role in xenobiotic detoxification. In Homo sapiens (Human), this protein is Nicotinamide N-methyltransferase.